A 314-amino-acid chain; its full sequence is MGAGEKTAAGMPRIGMGTAVQGPKPDPIRRAVLRAIEIGYRHFDTAAHYETEAPIGEAAAEAVRSGAVASRDELFITSKLWCSDAHRDRVVPALRQSLRNLQMEYVDLYLVHWPVSMKPGRFKAPFTAEDFVPFDMRAVWEAMEECHRLGLAKAIGVANFSCKKLETLLSFATIPPTVNQVEVNPVWQQRKLREFCRGKGIQLCAYSPLGAKGTHWGSDAVMDAGVLQEIAASRGKSVAQVCLRWVYEQGDCLIVKSFDEARMRENLEVDGWELTEEERLRIAEIPQRKINLGKRYVSEHGPYKSLEELWDGEI.

The segment at 1–21 (MGAGEKTAAGMPRIGMGTAVQ) is disordered. Asp44 contributes to the NADP(+) binding site. Tyr49 (proton donor) is an active-site residue. His112 is a binding site for substrate. NADP(+)-binding positions include 158-159 (AN), Gln180, 258-266 (FDEARMREN), and 273-281 (ELTEEERLR).

It belongs to the aldo/keto reductase family. In terms of tissue distribution, mostly expressed in root tissues, observed, at low levels, in mesocotyl and embryonic roots, seedling roots, crown and seedling leafes, mature bracts, anthers, pistil, caryopsis and embryos.

It carries out the reaction 2'-deoxymugineate + NAD(+) = 3''-deamino-3''-oxonicotianamine + NADH + H(+). The enzyme catalyses 2'-deoxymugineate + NADP(+) = 3''-deamino-3''-oxonicotianamine + NADPH + H(+). It functions in the pathway siderophore biosynthesis. In terms of biological role, catalyzes the reduction of a 3''-keto intermediate during the biosynthesis of 2'-deoxymugineic acid (DMA) from L-Met. Involved in the formation of phytosiderophores (MAs) belonging to the mugineic acid family and required to acquire iron. This Triticum aestivum (Wheat) protein is Deoxymugineic acid synthase 1-D.